Consider the following 159-residue polypeptide: Protein-export protein SecB (159 aa).

The protein belongs to the SecB family. As to quaternary structure, homotetramer, a dimer of dimers. One homotetramer interacts with 1 SecA dimer.

It is found in the cytoplasm. One of the proteins required for the normal export of preproteins out of the cell cytoplasm. It is a molecular chaperone that binds to a subset of precursor proteins, maintaining them in a translocation-competent state. It also specifically binds to its receptor SecA. The chain is Protein-export protein SecB from Rhizobium etli (strain CIAT 652).